We begin with the raw amino-acid sequence, 486 residues long: Probable transporter MCH1 (486 aa).

Transmembrane regions (helical) follow at residues 31 to 51 (ISFF…LFSL), 69 to 89 (FIAS…GYLA), 91 to 111 (CYGP…SYFV), 132 to 152 (FGIC…SSLL), 164 to 184 (LAIS…SQLM), and 204 to 224 (FFGV…SVVS). Residues 236 to 260 (EMEEADEESPLMTSRSRHSHHSCED) form a disordered region. Residues 280–300 (FINFLKDKSAWLLLASLILNI) form a helical membrane-spanning segment. N-linked (GlcNAc...) asparagine glycosylation is present at Asn322. The next 2 helical transmembrane spans lie at 327–348 (VSIM…SDYL) and 357–377 (ICRV…QFMV). Asn390 is a glycosylation site (N-linked (GlcNAc...) asparagine). The next 2 helical transmembrane spans lie at 395 to 415 (GGLF…DMMG) and 417 to 437 (TWGS…IFYG). An N-linked (GlcNAc...) asparagine glycan is attached at Asn457. A helical transmembrane segment spans residues 458–478 (LTAVGLSVSLILIIIVWKGIW).

The protein belongs to the major facilitator superfamily.

The protein resides in the vacuole membrane. Functionally, probable transporter. The polypeptide is Probable transporter MCH1 (MCH1) (Debaryomyces hansenii (strain ATCC 36239 / CBS 767 / BCRC 21394 / JCM 1990 / NBRC 0083 / IGC 2968) (Yeast)).